Reading from the N-terminus, the 532-residue chain is Collagen alpha-1(XXIII) chain (532 aa).

At 1–23 (MGAGERAAGGGGAQDPGAGCGSR) the chain is on the cytoplasmic side. The chain crosses the membrane as a helical; Signal-anchor for type II membrane protein span at residues 24–45 (ALSALCLLLSVGSAAACLLLGA). Residues 46-532 (QAAALHGRVA…GLPVPGCWHK (487 aa)) are Extracellular-facing. Disordered regions lie at residues 102 to 296 (PSEC…GEQG) and 308 to 532 (LDAL…CWHK). Collagen-like domains are found at residues 108–166 (PPGP…RGAQ), 173–232 (GPPG…PGKK), 240–298 (QPGL…QGDT), and 313–372 (GPPG…MGLS). Residues 129 to 145 (QSGRDGYPGPLGLDGKP) are compositionally biased toward low complexity. The span at 174 to 184 (PPGPPGPPGAR) shows a compositional bias: pro residues. Low complexity predominate over residues 196 to 207 (RGAQGPAGPRGE). Residues 314–326 (PPGPQGAPGPPGI) are compositionally biased toward pro residues. 2 stretches are compositionally biased toward basic and acidic residues: residues 342 to 354 (DGEKGPKGPKGDP) and 380 to 393 (PKGEKGESASDHLQ). Residues 403–414 (PGPPGPPGPPGP) are compositionally biased toward pro residues. Collagen-like domains lie at 404-452 (GPPG…GPPG) and 455-514 (GLPG…PGLD). Composition is skewed to basic and acidic residues over residues 427 to 441 (DGAKGEKGTSGERGP) and 478 to 495 (RGEKGDRSERGEKGERGV).

As to quaternary structure, homotrimer. Undergoes proteolytic cleavage by furin protease to yield a 60 kDa soluble form that forms a homotrimer and exhibits a low affinity interaction with heparin.

The protein localises to the cell membrane. The sequence is that of Collagen alpha-1(XXIII) chain (Col23a1) from Mus musculus (Mouse).